The following is a 296-amino-acid chain: MKNEKIVVLYGGDSPEREVSLKSGKAVLDSLISQGYDAVGVDASGKELVAKLLELKPDKCFVALHGEDGENGRVSALLEMLEIKHTSSSMKSSVITMDKMISKEILMHHRMPTPMAKFLTDKLVAEDEISFPAAVKPSSGGSSIATFKVKSIQELKHAYEEASKYGEVMIEQWVTGKEITVAIVNDEVYSSVWIEPQNEFYDYESKYSGKSIYHSPSGLCEQKELEVRQLAKKAYDLLGCSGHARVDFIYDDRGNFYIMEINSSPGMTDNSLSPKSAAAEGVDFDSFVKRIIEQAQ.

The 191-residue stretch at 103–293 (KEILMHHRMP…FDSFVKRIIE (191 aa)) folds into the ATP-grasp domain. ATP is bound at residue 129–180 (ISFPAAVKPSSGGSSIATFKVKSIQELKHAYEEASKYGEVMIEQWVTGKEIT). Mg(2+) contacts are provided by D247, E260, and N262.

Belongs to the D-alanine--D-alanine ligase family. Mg(2+) serves as cofactor. The cofactor is Mn(2+).

The protein resides in the cytoplasm. It carries out the reaction 2 D-alanine + ATP = D-alanyl-D-alanine + ADP + phosphate + H(+). Its pathway is cell wall biogenesis; peptidoglycan biosynthesis. Cell wall formation. The chain is D-alanine--D-alanine ligase from Francisella tularensis subsp. holarctica (strain LVS).